We begin with the raw amino-acid sequence, 262 residues long: Protein crossbronx-like (262 aa).

In terms of domain architecture, UBC core spans 15-179 (RQGYQVLAEY…VQELALFTKK (165 aa)).

This sequence belongs to the ubiquitin-conjugating enzyme family. FTS subfamily.

The chain is Protein crossbronx-like from Drosophila pseudoobscura pseudoobscura (Fruit fly).